The sequence spans 378 residues: Poly(3-hydroxyalkanoate) polymerase subunit PhaC (378 aa).

The AB hydrolase-1 domain maps to proline 84–methionine 356.

Belongs to the PHA/PHB synthase family. Type III PhaC subfamily. As to quaternary structure, forms a heterodimer with PhaE, which may multimerize in the presence of 3-hydroxybutyryl-CoA. Both subunits are required for PHB synthesis in E.coli and in PHA-negative A.eutrophus.

It is found in the cytoplasm. The enzyme catalyses (3R)-3-hydroxybutanoyl-CoA + [(3R)-hydroxybutanoate](n) = [(3R)-hydroxybutanoate](n+1) + CoA. Its pathway is biopolymer metabolism; poly-(R)-3-hydroxybutanoate biosynthesis. In terms of biological role, when expressed in E.coli with Synechocystis PhaE and C.necator PhaA and PhaB, confers the ability to synthesize up to 13% (w/w) poly(3-hydroxybutyrate) (PHB) depending on the carbon source; all 4 genes are necessary for PHB production. Cell-free in vitro coexpression with PhaE gives a heterodimer able to polymerize 3-hydroxybutyrate-CoA. The polypeptide is Poly(3-hydroxyalkanoate) polymerase subunit PhaC (Synechocystis sp. (strain ATCC 27184 / PCC 6803 / Kazusa)).